We begin with the raw amino-acid sequence, 233 residues long: Small ribosomal subunit protein uS3 (233 aa).

The KH type-2 domain maps to 39–107; sequence VRQFLMKTLE…PVQINISEVR (69 aa).

It belongs to the universal ribosomal protein uS3 family. As to quaternary structure, part of the 30S ribosomal subunit. Forms a tight complex with proteins S10 and S14.

Its function is as follows. Binds the lower part of the 30S subunit head. Binds mRNA in the 70S ribosome, positioning it for translation. The sequence is that of Small ribosomal subunit protein uS3 from Buchnera aphidicola subsp. Acyrthosiphon pisum (strain 5A).